The chain runs to 96 residues: Large ribosomal subunit protein eL14 (96 aa).

This sequence belongs to the eukaryotic ribosomal protein eL14 family.

This is Large ribosomal subunit protein eL14 from Metallosphaera sedula (strain ATCC 51363 / DSM 5348 / JCM 9185 / NBRC 15509 / TH2).